The chain runs to 342 residues: tRNA N6-adenosine threonylcarbamoyltransferase (342 aa).

Fe cation-binding residues include His-114 and His-118. Residues 136 to 140 (LVSGG), Asp-169, Gly-182, Asp-186, and Asn-275 each bind substrate. Asp-301 provides a ligand contact to Fe cation.

It belongs to the KAE1 / TsaD family. It depends on Fe(2+) as a cofactor.

It is found in the cytoplasm. It carries out the reaction L-threonylcarbamoyladenylate + adenosine(37) in tRNA = N(6)-L-threonylcarbamoyladenosine(37) in tRNA + AMP + H(+). Required for the formation of a threonylcarbamoyl group on adenosine at position 37 (t(6)A37) in tRNAs that read codons beginning with adenine. Is involved in the transfer of the threonylcarbamoyl moiety of threonylcarbamoyl-AMP (TC-AMP) to the N6 group of A37, together with TsaE and TsaB. TsaD likely plays a direct catalytic role in this reaction. The sequence is that of tRNA N6-adenosine threonylcarbamoyltransferase from Streptococcus pyogenes serotype M18 (strain MGAS8232).